Here is a 310-residue protein sequence, read N- to C-terminus: Ribonuclease HIII (310 aa).

An RNase H type-2 domain is found at 90–306 (FQCIGSDEAG…RKKAENLVQK (217 aa)). 3 residues coordinate a divalent metal cation: Asp96, Glu97, and Asp201.

Belongs to the RNase HII family. RnhC subfamily. Mn(2+) is required as a cofactor. Mg(2+) serves as cofactor.

It is found in the cytoplasm. The enzyme catalyses Endonucleolytic cleavage to 5'-phosphomonoester.. Its function is as follows. Endonuclease that specifically degrades the RNA of RNA-DNA hybrids. The sequence is that of Ribonuclease HIII from Staphylococcus saprophyticus subsp. saprophyticus (strain ATCC 15305 / DSM 20229 / NCIMB 8711 / NCTC 7292 / S-41).